The chain runs to 114 residues: Large ribosomal subunit protein uL22 (114 aa).

Belongs to the universal ribosomal protein uL22 family. In terms of assembly, part of the 50S ribosomal subunit.

In terms of biological role, this protein binds specifically to 23S rRNA; its binding is stimulated by other ribosomal proteins, e.g. L4, L17, and L20. It is important during the early stages of 50S assembly. It makes multiple contacts with different domains of the 23S rRNA in the assembled 50S subunit and ribosome. Functionally, the globular domain of the protein is located near the polypeptide exit tunnel on the outside of the subunit, while an extended beta-hairpin is found that lines the wall of the exit tunnel in the center of the 70S ribosome. This Mycoplasmopsis agalactiae (strain NCTC 10123 / CIP 59.7 / PG2) (Mycoplasma agalactiae) protein is Large ribosomal subunit protein uL22.